Here is a 257-residue protein sequence, read N- to C-terminus: UPF0246 protein YaaA (257 aa).

This sequence belongs to the UPF0246 family.

The polypeptide is UPF0246 protein YaaA (Salmonella schwarzengrund (strain CVM19633)).